Reading from the N-terminus, the 20-residue chain is Pregnancy-associated glycoprotein 75 (20 aa).

Belongs to the peptidase A1 family. Post-translationally, N-glycosylated. In terms of tissue distribution, expressed in chorionic epithelium (trophectoderm).

The protein localises to the secreted. This chain is Pregnancy-associated glycoprotein 75, found in Bubalus bubalis (Domestic water buffalo).